A 353-amino-acid polypeptide reads, in one-letter code: UDP-N-acetylglucosamine--N-acetylmuramyl-(pentapeptide) pyrophosphoryl-undecaprenol N-acetylglucosamine transferase (353 aa).

Residues 10-12 (TGG), N124, S183, and Q283 contribute to the UDP-N-acetyl-alpha-D-glucosamine site.

The protein belongs to the glycosyltransferase 28 family. MurG subfamily.

The protein localises to the cell inner membrane. It catalyses the reaction di-trans,octa-cis-undecaprenyl diphospho-N-acetyl-alpha-D-muramoyl-L-alanyl-D-glutamyl-meso-2,6-diaminopimeloyl-D-alanyl-D-alanine + UDP-N-acetyl-alpha-D-glucosamine = di-trans,octa-cis-undecaprenyl diphospho-[N-acetyl-alpha-D-glucosaminyl-(1-&gt;4)]-N-acetyl-alpha-D-muramoyl-L-alanyl-D-glutamyl-meso-2,6-diaminopimeloyl-D-alanyl-D-alanine + UDP + H(+). Its pathway is cell wall biogenesis; peptidoglycan biosynthesis. Functionally, cell wall formation. Catalyzes the transfer of a GlcNAc subunit on undecaprenyl-pyrophosphoryl-MurNAc-pentapeptide (lipid intermediate I) to form undecaprenyl-pyrophosphoryl-MurNAc-(pentapeptide)GlcNAc (lipid intermediate II). This chain is UDP-N-acetylglucosamine--N-acetylmuramyl-(pentapeptide) pyrophosphoryl-undecaprenol N-acetylglucosamine transferase, found in Helicobacter pylori (strain ATCC 700392 / 26695) (Campylobacter pylori).